Consider the following 350-residue polypeptide: Nicotinate-nucleotide--dimethylbenzimidazole phosphoribosyltransferase (350 aa).

E317 (proton acceptor) is an active-site residue.

This sequence belongs to the CobT family.

It carries out the reaction 5,6-dimethylbenzimidazole + nicotinate beta-D-ribonucleotide = alpha-ribazole 5'-phosphate + nicotinate + H(+). It functions in the pathway nucleoside biosynthesis; alpha-ribazole biosynthesis; alpha-ribazole from 5,6-dimethylbenzimidazole: step 1/2. Catalyzes the synthesis of alpha-ribazole-5'-phosphate from nicotinate mononucleotide (NAMN) and 5,6-dimethylbenzimidazole (DMB). The sequence is that of Nicotinate-nucleotide--dimethylbenzimidazole phosphoribosyltransferase from Shewanella sp. (strain MR-7).